The sequence spans 178 residues: Peptide methionine sulfoxide reductase MsrA (178 aa).

Residue Cys11 is part of the active site.

This sequence belongs to the MsrA Met sulfoxide reductase family.

The enzyme catalyses L-methionyl-[protein] + [thioredoxin]-disulfide + H2O = L-methionyl-(S)-S-oxide-[protein] + [thioredoxin]-dithiol. It carries out the reaction [thioredoxin]-disulfide + L-methionine + H2O = L-methionine (S)-S-oxide + [thioredoxin]-dithiol. Functionally, has an important function as a repair enzyme for proteins that have been inactivated by oxidation. Catalyzes the reversible oxidation-reduction of methionine sulfoxide in proteins to methionine. In Natronomonas pharaonis (strain ATCC 35678 / DSM 2160 / CIP 103997 / JCM 8858 / NBRC 14720 / NCIMB 2260 / Gabara) (Halobacterium pharaonis), this protein is Peptide methionine sulfoxide reductase MsrA.